A 354-amino-acid polypeptide reads, in one-letter code: 3-dehydroquinate synthase (354 aa).

NAD(+) contacts are provided by residues 100–104, 124–125, Lys136, Lys145, and 163–166; these read GATGD, TT, and FLKT. The Zn(2+) site is built by Glu178, His242, and His256.

The protein belongs to the sugar phosphate cyclases superfamily. Dehydroquinate synthase family. NAD(+) is required as a cofactor. The cofactor is Co(2+). Requires Zn(2+) as cofactor.

It is found in the cytoplasm. It catalyses the reaction 7-phospho-2-dehydro-3-deoxy-D-arabino-heptonate = 3-dehydroquinate + phosphate. It functions in the pathway metabolic intermediate biosynthesis; chorismate biosynthesis; chorismate from D-erythrose 4-phosphate and phosphoenolpyruvate: step 2/7. Catalyzes the conversion of 3-deoxy-D-arabino-heptulosonate 7-phosphate (DAHP) to dehydroquinate (DHQ). The polypeptide is 3-dehydroquinate synthase (Staphylococcus aureus (strain Mu50 / ATCC 700699)).